The primary structure comprises 86 residues: Putative defensin-like protein 9 (86 aa).

The signal sequence occupies residues 1 to 29 (MKSSMQLISTLFFLVILVVAPGMKMVVEG). The residue at position 30 (Gln30) is a Pyrrolidone carboxylic acid. Disulfide bonds link Cys34–Cys79, Cys45–Cys65, Cys51–Cys73, and Cys55–Cys75.

It belongs to the DEFL family.

It localises to the secreted. The sequence is that of Putative defensin-like protein 9 (LCR76) from Arabidopsis thaliana (Mouse-ear cress).